Here is a 215-residue protein sequence, read N- to C-terminus: Pyridoxine/pyridoxamine 5'-phosphate oxidase (215 aa).

Substrate-binding positions include 9 to 12 and Lys69; that span reads RREY. FMN-binding positions include 64–69, 79–80, Lys86, and Gln108; these read RILLLK and FT. Tyr126, Arg130, and Ser134 together coordinate substrate. FMN is bound by residues 143–144 and Trp188; that span reads QS. A substrate-binding site is contributed by 194–196; the sequence is RLH. Arg198 is an FMN binding site.

Belongs to the pyridoxamine 5'-phosphate oxidase family. In terms of assembly, homodimer. The cofactor is FMN.

The enzyme catalyses pyridoxamine 5'-phosphate + O2 + H2O = pyridoxal 5'-phosphate + H2O2 + NH4(+). The catalysed reaction is pyridoxine 5'-phosphate + O2 = pyridoxal 5'-phosphate + H2O2. It participates in cofactor metabolism; pyridoxal 5'-phosphate salvage; pyridoxal 5'-phosphate from pyridoxamine 5'-phosphate: step 1/1. The protein operates within cofactor metabolism; pyridoxal 5'-phosphate salvage; pyridoxal 5'-phosphate from pyridoxine 5'-phosphate: step 1/1. Functionally, catalyzes the oxidation of either pyridoxine 5'-phosphate (PNP) or pyridoxamine 5'-phosphate (PMP) into pyridoxal 5'-phosphate (PLP). The chain is Pyridoxine/pyridoxamine 5'-phosphate oxidase from Pseudomonas paraeruginosa (strain DSM 24068 / PA7) (Pseudomonas aeruginosa (strain PA7)).